A 57-amino-acid chain; its full sequence is UPF0057 membrane protein T23F2.3 (57 aa).

2 consecutive transmembrane segments (helical) span residues 4-24 (TCTDIPKFICAVLLPPIGVFL) and 36-56 (ILLTILGYIPGIIYACYVILA).

This sequence belongs to the UPF0057 (PMP3) family.

Its subcellular location is the membrane. The polypeptide is UPF0057 membrane protein T23F2.3 (Caenorhabditis elegans).